The primary structure comprises 415 residues: Vascular endothelial growth factor C (415 aa).

The first 31 residues, 1 to 31 (MHLLCFLSLACSLLAAALIPGPREAPATVAA), serve as a signal peptide directing secretion. Residues 32-107 (FESGLGFSEA…RTGDTVKLAA (76 aa)) constitute a propeptide that is removed on maturation. Cystine bridges form between Cys127-Cys169, Cys158-Cys205, and Cys162-Cys207. Residues Asn171, Asn201, and Asn236 are each glycosylated (N-linked (GlcNAc...) asparagine). Residues 224–415 (SLPATLPQCQ…PSYWKRPHLN (192 aa)) constitute a propeptide that is removed on maturation. 4 consecutive repeat copies span residues 276–291 (CGPN…QCVC), 300–315 (CGPH…QCVC), 324–339 (CGAN…QCVC), and 343–358 (CPRN…ACEC). Positions 276–358 (CGPNKELDED…LNPGKCACEC (83 aa)) are 4 X 16 AA repeats of C-X(10)-C-X-C-X(1,3)-C.

This sequence belongs to the PDGF/VEGF growth factor family. Homodimer; non-covalent and antiparallel. Interacts with FLT4/VEGFR3; the interaction is required for FLT4/VEGFR3 homodimarization and activation. Post-translationally, undergoes a complex proteolytic maturation which generates a variety of processed secreted forms with increased activity toward VEGFR-3, but only the fully processed form could activate VEGFR-2. VEGF-C first form an antiparallel homodimer linked by disulfide bonds. Before secretion, a cleavage occurs between Arg-223 and Ser-224 producing a heterotetramer. The next extracellular step of the processing removes the N-terminal propeptide. Finally the mature VEGF-C is composed mostly of two VEGF homology domains (VHDs) bound by non-covalent interactions. As to expression, highly expressed in the lung, ovary, preputial gland and the adrenal gland. Expressed in the post-pubertal mammary glands.

The protein localises to the secreted. Functionally, growth factor active in angiogenesis, and endothelial cell growth, stimulating their proliferation and migration and also has effects on the permeability of blood vessels. May function in angiogenesis of the venous and lymphatic vascular systems during embryogenesis, and also in the maintenance of differentiated lymphatic endothelium in adults. Binds and activates KDR/VEGFR2 and FLT4/VEGFR3 receptors. This chain is Vascular endothelial growth factor C (Vegfc), found in Rattus norvegicus (Rat).